The primary structure comprises 66 residues: Large ribosomal subunit protein bL31 (66 aa).

Cys16, Cys18, Cys36, and Cys39 together coordinate Zn(2+).

Belongs to the bacterial ribosomal protein bL31 family. Type A subfamily. As to quaternary structure, part of the 50S ribosomal subunit. Requires Zn(2+) as cofactor.

In terms of biological role, binds the 23S rRNA. The sequence is that of Large ribosomal subunit protein bL31 from Campylobacter hominis (strain ATCC BAA-381 / DSM 21671 / CCUG 45161 / LMG 19568 / NCTC 13146 / CH001A).